The primary structure comprises 157 residues: uncharacterized protein (157 aa).

Lysine 115 is covalently cross-linked (Isoglutamyl lysine isopeptide (Lys-Gln) (interchain with Q-Cter in protein Pup)).

This is an uncharacterized protein from Mycolicibacterium smegmatis (strain ATCC 700084 / mc(2)155) (Mycobacterium smegmatis).